The primary structure comprises 275 residues: Expansin-B6 (275 aa).

A signal peptide spans 1–25 (MAARMGSKVAAILAILSVLVVHGSC). Residue N33 is glycosylated (N-linked (GlcNAc...) asparagine). The region spanning 64–170 (GGACGFKNVN…RRVPCNYPGL (107 aa)) is the Expansin-like EG45 domain. 3 cysteine pairs are disulfide-bonded: C67-C95, C98-C165, and C103-C109. Residues 183-270 (VYFAVLVEYE…NWSPNSNYRS (88 aa)) form the Expansin-like CBD domain.

Belongs to the expansin family. Expansin B subfamily. In terms of tissue distribution, expressed in internodes.

Its subcellular location is the secreted. The protein localises to the cell wall. It localises to the membrane. Functionally, may cause loosening and extension of plant cell walls by disrupting non-covalent bonding between cellulose microfibrils and matrix glucans. No enzymatic activity has been found. May be required for rapid internodal elongation in deepwater rice during submergence. The polypeptide is Expansin-B6 (EXPB6) (Oryza sativa subsp. japonica (Rice)).